A 213-amino-acid chain; its full sequence is Small ribosomal subunit protein uS7 (213 aa).

This sequence belongs to the universal ribosomal protein uS7 family. As to quaternary structure, component of the small ribosomal subunit (SSU). Mature N.crassa ribosomes consist of a small (40S) and a large (60S) subunit. The 40S small subunit contains 1 molecule of ribosomal RNA (18S rRNA) and at least 32 different proteins. The large 60S subunit contains 3 rRNA molecules (26S, 5.8S and 5S rRNA) and at least 42 different proteins.

The protein localises to the cytoplasm. Functionally, component of the ribosome, a large ribonucleoprotein complex responsible for the synthesis of proteins in the cell. The small ribosomal subunit (SSU) binds messenger RNAs (mRNAs) and translates the encoded message by selecting cognate aminoacyl-transfer RNA (tRNA) molecules. The large subunit (LSU) contains the ribosomal catalytic site termed the peptidyl transferase center (PTC), which catalyzes the formation of peptide bonds, thereby polymerizing the amino acids delivered by tRNAs into a polypeptide chain. The nascent polypeptides leave the ribosome through a tunnel in the LSU and interact with protein factors that function in enzymatic processing, targeting, and the membrane insertion of nascent chains at the exit of the ribosomal tunnel. This is Small ribosomal subunit protein uS7 (rps-5) from Neurospora crassa (strain ATCC 24698 / 74-OR23-1A / CBS 708.71 / DSM 1257 / FGSC 987).